The sequence spans 934 residues: 3-hydroxy-3-methylglutaryl-coenzyme A reductase (934 aa).

The Lumenal portion of the chain corresponds to 1–111; that stretch reads MFYHGASANQ…VLNLVRGAET (111 aa). Residues 112–132 form a helical membrane-spanning segment; it reads FDIALVTCAYIAMFYTLFNLF. The region spanning 113–280 is the SSD domain; the sequence is DIALVTCAYI…STFLSAILSL (168 aa). The Cytoplasmic segment spans residues 133 to 141; the sequence is ARMRAVGSK. A helical transmembrane segment spans residues 142 to 162; it reads VWLGLSTLVSSFFAFLFALYI. Residues 163 to 168 are Lumenal-facing; the sequence is TTRVLD. Residues 169–189 form a helical membrane-spanning segment; that stretch reads LSIPFLSLSEGIPFFVAVVGF. Topologically, residues 190–231 are cytoplasmic; the sequence is NNKILLAEKVLQNQLNAQSSKNDAPTVLYQALREQGPLLLRD. A helical transmembrane segment spans residues 232–252; sequence HLFMITAFLGCSFYASYLDGL. Topologically, residues 253–256 are lumenal; the sequence is KNFC. The helical transmembrane segment at 257-277 threads the bilayer; it reads ILAALILAFDILTTSTFLSAI. At 278–334 the chain is on the cytoplasmic side; it reads LSLKLEINQIHRSTLLREQLEDDGLTETTVDDVLKSNSLAGTKTFTDAPSTLVTVAK. A helical membrane pass occupies residues 335-355; it reads VAGVSVFFGLHFYGFGSAWLS. The Lumenal segment spans residues 356-421; sequence DLSAGNETND…GLISTAARDK (66 aa). Asn-361, Asn-364, and Asn-382 each carry an N-linked (GlcNAc...) asparagine glycan. The helical transmembrane segment at 422–442 threads the bilayer; it reads YISKFILFAFAVSASINVYLL. The Cytoplasmic portion of the chain corresponds to 443–934; it reads NVARIHTTRL…MQHNRAAAKK (492 aa). Catalysis depends on Glu-618, which acts as the Charge relay system. A CoA-binding site is contributed by 624 to 630; that stretch reads SAMRGCK. NADP(+) is bound by residues 685 to 687 and 712 to 720; these read SRF and DAMGMNMIS. Lys-752 (charge relay system) is an active-site residue. A CoA-binding site is contributed by 781-783; sequence VLK. The Charge relay system role is filled by Asp-828. Residue 923 to 924 coordinates CoA; it reads SH. The Proton donor role is filled by His-924. 928-929 contributes to the NADP(+) binding site; it reads NR.

It belongs to the HMG-CoA reductase family.

It is found in the endoplasmic reticulum membrane. The catalysed reaction is (R)-mevalonate + 2 NADP(+) + CoA = (3S)-3-hydroxy-3-methylglutaryl-CoA + 2 NADPH + 2 H(+). It functions in the pathway metabolic intermediate biosynthesis; (R)-mevalonate biosynthesis; (R)-mevalonate from acetyl-CoA: step 3/3. In terms of biological role, HMG-CoA reductase; part of the first module of ergosterol biosynthesis pathway that includes the early steps of the pathway, conserved across all eukaryotes, and which results in the formation of mevalonate from acetyl-coenzyme A (acetyl-CoA). In this module, the cytosolic acetyl-CoA acetyltransferase catalyzes the formation of acetoacetyl-CoA. The hydroxymethylglutaryl-CoA synthase then condenses acetyl-CoA with acetoacetyl-CoA to form HMG-CoA. The rate-limiting step of the early module is the reduction to mevalonate by the 3-hydroxy-3-methylglutaryl-coenzyme A (HMG-CoA) reductase. This Cyberlindnera jadinii (Torula yeast) protein is 3-hydroxy-3-methylglutaryl-coenzyme A reductase.